A 510-amino-acid chain; its full sequence is Maturase K (510 aa).

It belongs to the intron maturase 2 family. MatK subfamily.

It is found in the plastid. The protein localises to the chloroplast. In terms of biological role, usually encoded in the trnK tRNA gene intron. Probably assists in splicing its own and other chloroplast group II introns. This chain is Maturase K, found in Gratiola officinalis (Hedgehyssop).